The following is a 640-amino-acid chain: Biosynthetic arginine decarboxylase (640 aa).

Lys-105 is subject to N6-(pyridoxal phosphate)lysine. Phe-290–Tyr-300 is a binding site for substrate.

This sequence belongs to the Orn/Lys/Arg decarboxylase class-II family. SpeA subfamily. The cofactor is Mg(2+). Pyridoxal 5'-phosphate is required as a cofactor.

The enzyme catalyses L-arginine + H(+) = agmatine + CO2. In terms of biological role, catalyzes the biosynthesis of agmatine from arginine. This is Biosynthetic arginine decarboxylase from Vibrio vulnificus (strain CMCP6).